Here is a 409-residue protein sequence, read N- to C-terminus: Arginine deiminase (409 aa).

Cys-399 functions as the Amidino-cysteine intermediate in the catalytic mechanism.

It belongs to the arginine deiminase family.

It localises to the cytoplasm. It carries out the reaction L-arginine + H2O = L-citrulline + NH4(+). Its pathway is amino-acid degradation; L-arginine degradation via ADI pathway; carbamoyl phosphate from L-arginine: step 1/2. The polypeptide is Arginine deiminase (Streptococcus pneumoniae serotype 19F (strain G54)).